Reading from the N-terminus, the 149-residue chain is uncharacterized protein (149 aa).

It to B.subtilis XkdN.

This is an uncharacterized protein from Bacillus subtilis (strain 168).